Reading from the N-terminus, the 206-residue chain is Inner membrane-spanning protein YciB (206 aa).

5 helical membrane passes run 50 to 70 (PILL…GYLL), 78 to 98 (GTLW…IYFH), 105 to 125 (WKPT…QIFL), 150 to 170 (LSWV…AFNF), and 173 to 193 (AAWV…FIII).

Belongs to the YciB family.

It is found in the cell inner membrane. Plays a role in cell envelope biogenesis, maintenance of cell envelope integrity and membrane homeostasis. This is Inner membrane-spanning protein YciB from Herminiimonas arsenicoxydans.